A 206-amino-acid polypeptide reads, in one-letter code: MVKIIGITGGSGSGKTTVVNKISEVIPEFVLISQDNYYKSVGDYEYEFLDVNFDHPDAFDNNLFYKHLKKLKENKLIHMPLYDFINHKRKDETVEIVPTPVVIVEGIMIFVEERVRNLIDLKIYIDTPNDIRFIRRLERDMSKRGRTLESVIEQYLSTTRAGYYRFIEPTKEYADLIIPEGGHNDKALYVLSSFLRTLGQESSVFF.

Position 9–16 (9–16) interacts with ATP; sequence GGSGSGKT.

It belongs to the uridine kinase family.

Its subcellular location is the cytoplasm. The catalysed reaction is uridine + ATP = UMP + ADP + H(+). It catalyses the reaction cytidine + ATP = CMP + ADP + H(+). The protein operates within pyrimidine metabolism; CTP biosynthesis via salvage pathway; CTP from cytidine: step 1/3. Its pathway is pyrimidine metabolism; UMP biosynthesis via salvage pathway; UMP from uridine: step 1/1. In Borrelia turicatae (strain 91E135), this protein is Uridine kinase.